The sequence spans 430 residues: Glutamyl-tRNA reductase 1 (430 aa).

Substrate-binding positions include 49–52 (TCNR), serine 109, 114–116 (EGQ), and glutamine 120. Residue cysteine 50 is the Nucleophile of the active site. 189–194 (GAGSMA) serves as a coordination point for NADP(+).

The protein belongs to the glutamyl-tRNA reductase family. Homodimer.

It carries out the reaction (S)-4-amino-5-oxopentanoate + tRNA(Glu) + NADP(+) = L-glutamyl-tRNA(Glu) + NADPH + H(+). The protein operates within porphyrin-containing compound metabolism; protoporphyrin-IX biosynthesis; 5-aminolevulinate from L-glutamyl-tRNA(Glu): step 1/2. Functionally, catalyzes the NADPH-dependent reduction of glutamyl-tRNA(Glu) to glutamate 1-semialdehyde (GSA). The chain is Glutamyl-tRNA reductase 1 from Nocardioides sp. (strain ATCC BAA-499 / JS614).